A 216-amino-acid chain; its full sequence is Elongation factor 1-beta (216 aa).

Residues G71–S131 form a disordered region. Residues A73 to A89 are compositionally biased toward low complexity. The span at D92–E107 shows a compositional bias: acidic residues. Residues E108 to G128 are compositionally biased toward basic and acidic residues.

It belongs to the EF-1-beta/EF-1-delta family. EF-1 is composed of 4 subunits: alpha, beta (1B-alpha=beta'), delta (1B-beta), and gamma (1B-gamma).

Its function is as follows. EF-1-beta and EF-1-beta' stimulate the exchange of GDP bound to EF-1-alpha to GTP. The chain is Elongation factor 1-beta from Triticum aestivum (Wheat).